The sequence spans 309 residues: Protein EXORDIUM-like 1 (309 aa).

The first 23 residues, 1–23 (MASFVMGYFLLFAVAFMCLDART), serve as a signal peptide directing secretion.

The protein belongs to the EXORDIUM family.

It localises to the secreted. The protein resides in the extracellular space. The protein localises to the apoplast. May play a role in a brassinosteroid-dependent regulatory pathway that controls growth and development under low carbon and energy availability. The sequence is that of Protein EXORDIUM-like 1 (EXL1) from Arabidopsis thaliana (Mouse-ear cress).